A 461-amino-acid chain; its full sequence is Zinc transporter 6 (461 aa).

At 1–33 the chain is on the cytoplasmic side; sequence MGTIHLFRKPQRSFFGKLLREFRLVAADRRSWK. Residues 34-54 form a helical membrane-spanning segment; the sequence is ILLFGVINLICTGFLLMWCSS. Residues 55–64 lie on the Extracellular side of the membrane; it reads TNSIALTAYT. The chain crosses the membrane as a helical span at residues 65–85; sequence YLTIFDLFSLMTCLISYWVTL. The Cytoplasmic portion of the chain corresponds to 86 to 98; the sequence is RKPSPVYSFGFER. A helical transmembrane segment spans residues 99 to 119; it reads LEVLAVFASTVLAQLGALFIL. Residues 120–134 are Extracellular-facing; that stretch reads KESAERFLEQPEIHT. Residues 135 to 155 form a helical membrane-spanning segment; the sequence is GRLLVGTFVALCFNLFTMLSI. Residues 156–200 are Cytoplasmic-facing; sequence RNKPFAYVSEAASTSWLQEHVADLSRSLCGIIPGLSSIFLPRMNP. A helical transmembrane segment spans residues 201-221; sequence FVLIDLAGAFALCITYMLIEI. Residues 222 to 223 are Extracellular-facing; that stretch reads NN. A helical membrane pass occupies residues 224-244; it reads YFAVDTASAIAIALMTFGTMY. At 245 to 461 the chain is on the cytoplasmic side; it reads PMSVYSGKVL…TNNRIGQPRP (217 aa). The tract at residues 371-392 is disordered; that stretch reads NPVTSTPAKPSSPPPEFSFNTP.

The protein belongs to the cation diffusion facilitator (CDF) transporter (TC 2.A.4) family. SLC30A subfamily. Heterodimer with SLC30A5; form a functional zinc ion transmembrane transporter. As to expression, expressed in brain; especially in cerebellum, hippocampus, parahippocampal gyrus, superior and middle temporal gyrus. Also expressed in B-cells, colon, eye, and lung. Lower expression was present in bone, brain, cervix, ear, heart, kidney, muscle, nerve, pancreas, prostate, skin, stomach, and testis.

The protein resides in the golgi apparatus. It localises to the trans-Golgi network membrane. Has probably no intrinsic transporter activity but together with SLC30A5 forms a functional zinc ion:proton antiporter heterodimer, mediating zinc entry into the lumen of organelles along the secretory pathway. As part of that zinc ion:proton antiporter, contributes to zinc ion homeostasis within the early secretory pathway and regulates the activation and folding of enzymes like alkaline phosphatases and enzymes involved in phosphatidylinositol glycan anchor biosynthesis. The polypeptide is Zinc transporter 6 (Homo sapiens (Human)).